We begin with the raw amino-acid sequence, 193 residues long: Ion-translocating oxidoreductase complex subunit B (193 aa).

The interval 1 to 26 (MSTMLIAVILLTLLALFFGVLLGFAA) is hydrophobic. Residues 32 to 90 (EGNPIVDELEAILPQTQCGQCGYPGCRPYAEAIANGDKVNKCPPGGTATMEKLANLMGV) enclose the 4Fe-4S domain. Positions 49, 52, 57, 73, 114, 117, 120, 124, 144, 147, 150, and 154 each coordinate [4Fe-4S] cluster. 4Fe-4S ferredoxin-type domains are found at residues 105–134 (KVAY…GAGK) and 136–164 (MHTV…MIPV).

This sequence belongs to the 4Fe4S bacterial-type ferredoxin family. RnfB subfamily. The complex is composed of six subunits: RnfA, RnfB, RnfC, RnfD, RnfE and RnfG. [4Fe-4S] cluster serves as cofactor.

The protein localises to the cell inner membrane. Part of a membrane-bound complex that couples electron transfer with translocation of ions across the membrane. This chain is Ion-translocating oxidoreductase complex subunit B, found in Shewanella sp. (strain ANA-3).